The sequence spans 498 residues: UDP-N-acetylmuramate--L-alanine ligase (498 aa).

133 to 139 contributes to the ATP binding site; it reads GSSGKTT.

The protein belongs to the MurCDEF family.

Its subcellular location is the cytoplasm. The enzyme catalyses UDP-N-acetyl-alpha-D-muramate + L-alanine + ATP = UDP-N-acetyl-alpha-D-muramoyl-L-alanine + ADP + phosphate + H(+). The protein operates within cell wall biogenesis; peptidoglycan biosynthesis. Functionally, cell wall formation. This Wolbachia pipientis wMel protein is UDP-N-acetylmuramate--L-alanine ligase.